The following is a 489-amino-acid chain: 5'-AMP-activated protein kinase subunit gamma-3 (489 aa).

The tract at residues 1-113 is disordered; it reads MEPGLEHALR…PAGVGTPPTG (113 aa). A compositionally biased stretch (low complexity) spans 34–46; it reads SSSWPSPAVTSSS. The segment covering 50-62 has biased composition (basic residues); it reads RGKRRAKALRWTR. CBS domains are found at residues 197-258, 280-340, and 355-415; these read MATS…RSPL, CFKP…LLPR, and TFRD…HLDM. Residues Arg225, 240 to 245, Val285, 306 to 307, and Lys325 each bind ADP; these read MLTITD and HR. Residues Arg225, 240-245, Val285, His306, 306-307, Lys325, Thr355, Ala360, 381-382, 397-400, Arg424, Leu432, His453, 453-454, and 469-472 contribute to the AMP site; these read MLTITD, HR, SA, SRFD, and SLSD. ATP contacts are provided by residues Arg225, 240–245, Val285, 306–307, Arg307, and Lys325; these read MLTITD and HR. The AMPK pseudosubstrate signature appears at 293-314; sequence LFEAVYTLIKNRIHRLPVLDPV. Residues 397–400, Arg424, Leu432, and 453–454 each bind ADP; these read SRFD and HR. Residues 397–400, Arg424, Leu432, and 453–454 contribute to the ATP site; these read SRFD and HR. The CBS 4 domain occupies 427-486; it reads CLEGVLSCQPHESLGEVIDRIAREQVHRLVLVDETQHLLGVVSLSDILQALVLSPAGIDA.

It belongs to the 5'-AMP-activated protein kinase gamma subunit family. As to quaternary structure, AMPK is a heterotrimer of an alpha catalytic subunit (PRKAA1 or PRKAA2), a beta (PRKAB1 or PRKAB2) and a gamma non-catalytic subunits (PRKAG1, PRKAG2 or PRKAG3). Interacts with FNIP1 and FNIP2. In terms of processing, phosphorylated by ULK1; leading to negatively regulate AMPK activity and suggesting the existence of a regulatory feedback loop between ULK1 and AMPK. Glycosylated; O-GlcNAcylated by OGT, promoting the AMP-activated protein kinase (AMPK) activity. Skeletal muscle, with weak expression in heart and pancreas.

Functionally, AMP/ATP-binding subunit of AMP-activated protein kinase (AMPK), an energy sensor protein kinase that plays a key role in regulating cellular energy metabolism. In response to reduction of intracellular ATP levels, AMPK activates energy-producing pathways and inhibits energy-consuming processes: inhibits protein, carbohydrate and lipid biosynthesis, as well as cell growth and proliferation. AMPK acts via direct phosphorylation of metabolic enzymes, and by longer-term effects via phosphorylation of transcription regulators. AMPK also acts as a regulator of cellular polarity by remodeling the actin cytoskeleton; probably by indirectly activating myosin. The AMPK gamma3 subunit is a non-catalytic subunit with a regulatory role in muscle energy metabolism. It mediates binding to AMP, ADP and ATP, leading to AMPK activation or inhibition: AMP-binding results in allosteric activation of alpha catalytic subunit (PRKAA1 or PRKAA2) both by inducing phosphorylation and preventing dephosphorylation of catalytic subunits. ADP also stimulates phosphorylation, without stimulating already phosphorylated catalytic subunit. ATP promotes dephosphorylation of catalytic subunit, rendering the AMPK enzyme inactive. This chain is 5'-AMP-activated protein kinase subunit gamma-3 (PRKAG3), found in Homo sapiens (Human).